Consider the following 447-residue polypeptide: C4-dicarboxylate transport protein 3 (447 aa).

A run of 8 helical transmembrane segments spans residues 5–27 (TLGK…GVAA), 42–64 (IKLI…IARM), 77–99 (ALVY…VNLV), 146–165 (LARN…GIAL), 186–208 (VFSI…MAFT), 223–245 (LMAT…VARL), 315–337 (IFVA…LGVL), and 352–374 (FITL…VLLL).

Belongs to the dicarboxylate/amino acid:cation symporter (DAACS) (TC 2.A.23) family.

Its subcellular location is the cell inner membrane. Responsible for the transport of dicarboxylates such as succinate, fumarate, and malate from the periplasm across the membrane. In Ralstonia nicotianae (strain ATCC BAA-1114 / GMI1000) (Ralstonia solanacearum), this protein is C4-dicarboxylate transport protein 3 (dctA3).